The following is a 773-amino-acid chain: ATP-dependent RNA helicase MAK5 (773 aa).

A compositionally biased stretch (basic and acidic residues) spans 73–82 (KDSNKEKVGD). 2 disordered regions span residues 73-99 (KDSNKEKVGDDQESVENESGSDSESEL) and 114-144 (SAASYSSSDEDEQGNIESSKLTDPSEDVDED). The segment covering 83-99 (DQESVENESGSDSESEL) has biased composition (acidic residues). Threonine 135 is subject to Phosphothreonine. Serine 138 carries the post-translational modification Phosphoserine. Residues 171–199 (EWTNLAPLSMTILQSLQNLNFLRPTEIQK) carry the Q motif motif. Residues 202 to 399 (IPVIMQGVDV…SSSRQVKDRR (198 aa)) enclose the Helicase ATP-binding domain. ATP is bound at residue 215–222 (ASTGSGKT). The DEAD box signature appears at 333-336 (DEAD). The region spanning 452-615 (DLYCYYFLTM…STDLNSRSTN (164 aa)) is the Helicase C-terminal domain. Position 678 is a phosphoserine (serine 678).

It belongs to the DEAD box helicase family. DDX24/MAK5 subfamily.

It localises to the nucleus. The protein localises to the nucleolus. The catalysed reaction is ATP + H2O = ADP + phosphate + H(+). Functionally, ATP-binding RNA helicase involved in the biogenesis of 60S ribosomal subunits and is required for the normal formation of 25S and 5.8S rRNAs. Required for the maintenance of dsRNA killer plasmid. This Saccharomyces cerevisiae (strain ATCC 204508 / S288c) (Baker's yeast) protein is ATP-dependent RNA helicase MAK5 (MAK5).